The following is a 149-amino-acid chain: MKFRGHAHRSMDAKGRLMLTPEYRDQVYSDSPDGCVTLTIFEGNIVGFTPPDWAILEEKLTSIKSPSRKLRNFIRIIISGSEEVSLDKQGRITIPSYLRKSGKLDKDVVLAGVGDRFEIWDKREYEALLEQDFDDVSDELAECGVELPF.

2 SpoVT-AbrB domains span residues 6 to 52 (HAHR…TPPD) and 81 to 124 (SEEV…DKRE).

Belongs to the MraZ family. In terms of assembly, forms oligomers.

It localises to the cytoplasm. Its subcellular location is the nucleoid. The chain is Transcriptional regulator MraZ from Maridesulfovibrio salexigens (strain ATCC 14822 / DSM 2638 / NCIMB 8403 / VKM B-1763) (Desulfovibrio salexigens).